The chain runs to 286 residues: Cytosolic 5'-nucleotidase 3 (286 aa).

Asp-38 (nucleophile) is an active-site residue. Positions 38 and 40 each coordinate Mg(2+). Catalysis depends on Asp-40, which acts as the Proton donor. Residues Glu-85, Ser-106, 153 to 154, and Lys-202 contribute to the substrate site; that span reads SA. Asp-227 serves as a coordination point for Mg(2+).

This sequence belongs to the pyrimidine 5'-nucleotidase family.

The protein localises to the cytoplasm. The enzyme catalyses a ribonucleoside 5'-phosphate + H2O = a ribonucleoside + phosphate. Its function is as follows. Can act both as nucleotidase and as phosphotransferase. The sequence is that of Cytosolic 5'-nucleotidase 3 (nt5c3) from Danio rerio (Zebrafish).